The primary structure comprises 91 residues: Small ribosomal subunit protein uS19 (91 aa).

This sequence belongs to the universal ribosomal protein uS19 family.

Protein S19 forms a complex with S13 that binds strongly to the 16S ribosomal RNA. This is Small ribosomal subunit protein uS19 from Pseudomonas syringae pv. tomato (strain ATCC BAA-871 / DC3000).